The primary structure comprises 423 residues: MSLNAFITETTIQGAADGPLDGTTVAVKDNISTKGVPTTCGSKMLADYEPPYNATVVEDLLAAGGTIVGKTNMDEFGMGTTTETSYFGPTKNPVDETRVPGGSSGGSAAAVANGDADLALGSDTGGSVRAPAAYCGVVGLKPTYGLVSRYGLVAYANSLEQIGPIAPTVEGAAELLDVIAGPDEHDGTTRDAGADADYASAATGDVDGLTIGVPQELTDGADDRVVERFEAALADLRAEGATTVDVALPSCEYAVAAYYVIAMSEASSNLARFDGVRYGTGGGFDGNWNETFADARADGFGDEVTRRILLGTYALSAGYHDKYYKQAQEARAWVKQDFDETFADVDVVASPTMPVLPPKLGESLDDPVQMYLADANTTPANLANLPAISVPAGDADGLPVGVQLVGPKFGEETIINAAAAVEQ.

Active-site charge relay system residues include Lys28 and Ser103. Ser127 acts as the Acyl-ester intermediate in catalysis.

Belongs to the amidase family. GatA subfamily. As to quaternary structure, heterotrimer of A, B and C subunits.

The catalysed reaction is L-glutamyl-tRNA(Gln) + L-glutamine + ATP + H2O = L-glutaminyl-tRNA(Gln) + L-glutamate + ADP + phosphate + H(+). In terms of biological role, allows the formation of correctly charged Gln-tRNA(Gln) through the transamidation of misacylated Glu-tRNA(Gln) in organisms which lack glutaminyl-tRNA synthetase. The reaction takes place in the presence of glutamine and ATP through an activated gamma-phospho-Glu-tRNA(Gln). This is Glutamyl-tRNA(Gln) amidotransferase subunit A from Halobacterium salinarum (strain ATCC 700922 / JCM 11081 / NRC-1) (Halobacterium halobium).